The sequence spans 149 residues: Calmodulin (149 aa).

At A2 the chain carries N-acetylalanine. 4 consecutive EF-hand domains span residues 8–43 (EQVSEFKEAFSLFDKDGDGQITTKELGTVMRSLGQN), 44–79 (PSESELQDMINEVDADNNGTIDFPEFLTMMARKMKD), 81–116 (DSEEEIREAFKVFDRDNNGFISAAELRHVMTSIGEK), and 117–149 (LTDDEVDEMIREADQDGDGRIDYNEFVQLMMQK). D21, D23, D25, Q27, E32, D57, D59, N61, T63, E68, D94, D96, N98, E105, D130, D132, D134, R136, and E141 together coordinate Ca(2+).

Belongs to the calmodulin family.

In terms of biological role, calmodulin mediates the control of a large number of enzymes, ion channels and other proteins by Ca(2+). Among the enzymes to be stimulated by the calmodulin-Ca(2+) complex are a number of protein kinases and phosphatases. In Colletotrichum gloeosporioides (Anthracnose fungus), this protein is Calmodulin.